A 416-amino-acid chain; its full sequence is Putative competence-damage inducible protein (416 aa).

The protein belongs to the CinA family.

The chain is Putative competence-damage inducible protein from Geobacillus sp. (strain WCH70).